The primary structure comprises 346 residues: N-acetyl-gamma-glutamyl-phosphate reductase (346 aa).

Cys149 is a catalytic residue.

It belongs to the NAGSA dehydrogenase family. Type 1 subfamily.

The protein localises to the cytoplasm. The catalysed reaction is N-acetyl-L-glutamate 5-semialdehyde + phosphate + NADP(+) = N-acetyl-L-glutamyl 5-phosphate + NADPH + H(+). The protein operates within amino-acid biosynthesis; L-arginine biosynthesis; N(2)-acetyl-L-ornithine from L-glutamate: step 3/4. Catalyzes the NADPH-dependent reduction of N-acetyl-5-glutamyl phosphate to yield N-acetyl-L-glutamate 5-semialdehyde. The polypeptide is N-acetyl-gamma-glutamyl-phosphate reductase (Pelobacter propionicus (strain DSM 2379 / NBRC 103807 / OttBd1)).